Reading from the N-terminus, the 394-residue chain is Isopentenyl-diphosphate delta-isomerase (394 aa).

10-11 contributes to the substrate binding site; sequence RK. Residues Thr67, 68-70, Ser101, and Asn129 each bind FMN; that span reads GMT. 101–103 contributes to the substrate binding site; sequence SQR. A substrate-binding site is contributed by Gln168. Glu169 contributes to the Mg(2+) binding site. FMN-binding positions include Lys200, Ser225, Thr230, 279–281, and 300–301; these read GMR and AL.

It belongs to the IPP isomerase type 2 family. Homooctamer. Dimer of tetramers. It depends on FMN as a cofactor. NADPH serves as cofactor. The cofactor is Mg(2+).

The protein localises to the cytoplasm. The catalysed reaction is isopentenyl diphosphate = dimethylallyl diphosphate. Involved in the biosynthesis of isoprenoids. Catalyzes the 1,3-allylic rearrangement of the homoallylic substrate isopentenyl (IPP) to its allylic isomer, dimethylallyl diphosphate (DMAPP). The sequence is that of Isopentenyl-diphosphate delta-isomerase from Pyrococcus furiosus (strain ATCC 43587 / DSM 3638 / JCM 8422 / Vc1).